A 341-amino-acid polypeptide reads, in one-letter code: Putative gustatory receptor 9a (341 aa).

A topological domain (cytoplasmic) is located at residue Met-1. The chain crosses the membrane as a helical span at residues 2-22 (SLWLEHFLTGYFQLCGLVCGW). At 23–30 (SGSRLGRL) the chain is on the extracellular side. The chain crosses the membrane as a helical span at residues 31-51 (LSSTFLVLILIELVGEIETYF). The Cytoplasmic segment spans residues 52-68 (TEENPDNESVPAYFAKV). A helical membrane pass occupies residues 69 to 89 (IMGVNMAYKMIHAWIALSALF). Residues 90–113 (ECRRFRYLLEELPPVKATSFIYRH) lie on the Extracellular side of the membrane. Residues 114-134 (LILEIILFACNAFLVLSEYTI) traverse the membrane as a helical segment. The Cytoplasmic segment spans residues 135-202 (RGIYLENLRY…LAKVTRSLSH (68 aa)). Residues 203–223 (LFGLSLLLLNVLCLGDWIIVC) form a helical membrane-spanning segment. Over 224-233 (NVYFMVAYLQ) the chain is Extracellular. Residues 234–254 (VLPATLFLFGQVMFVVCPTLI) form a helical membrane-spanning segment. Residues 255–318 (KIWSICAASH…GIYHLNLQTL (64 aa)) lie on the Cytoplasmic side of the membrane. The helical transmembrane segment at 319 to 339 (AGMFFFILEALVIFLQFVSLV) threads the bilayer. Topologically, residues 340-341 (RT) are extracellular.

This sequence belongs to the insect chemoreceptor superfamily. Gustatory receptor (GR) family. Gr2a subfamily. In terms of tissue distribution, expressed in neurons of the terminal external chemosensory organ of larvae.

It is found in the cell membrane. Probable gustatory receptor which mediates acceptance or avoidance behavior, depending on its substrates. The sequence is that of Putative gustatory receptor 9a (Gr9a) from Drosophila melanogaster (Fruit fly).